A 311-amino-acid polypeptide reads, in one-letter code: tRNA pseudouridine synthase B (311 aa).

D49 acts as the Nucleophile in catalysis.

It belongs to the pseudouridine synthase TruB family. Type 1 subfamily.

The enzyme catalyses uridine(55) in tRNA = pseudouridine(55) in tRNA. Its function is as follows. Responsible for synthesis of pseudouridine from uracil-55 in the psi GC loop of transfer RNAs. This is tRNA pseudouridine synthase B from Actinobacillus succinogenes (strain ATCC 55618 / DSM 22257 / CCUG 43843 / 130Z).